The chain runs to 267 residues: tRNA pseudouridine synthase A (267 aa).

Aspartate 54 acts as the Nucleophile in catalysis. Tyrosine 114 is a binding site for substrate.

The protein belongs to the tRNA pseudouridine synthase TruA family. Homodimer.

It catalyses the reaction uridine(38/39/40) in tRNA = pseudouridine(38/39/40) in tRNA. Functionally, formation of pseudouridine at positions 38, 39 and 40 in the anticodon stem and loop of transfer RNAs. The chain is tRNA pseudouridine synthase A from Tropheryma whipplei (strain TW08/27) (Whipple's bacillus).